Consider the following 421-residue polypeptide: Autophagy-related protein 17 (421 aa).

Belongs to the ATG17 family. As to quaternary structure, forms a complex with ATG13, ATG29 and CIS1/ATG31. The ATG17-ATG29-ATG31 complex interacts with the ATG1-ATG13 complex. Forms a complex with SNX4 and ATG20. Interacts with ATG11.

It localises to the cytoplasm. The protein localises to the preautophagosomal structure membrane. Functionally, autophagy-specific protein that functions with ATG13, ATG29, and CIS1/ATG31 in response to autophagy-inducing signals as a scaffold to recruit other ATG proteins to organize pre-autophagosomal structure (PAS) formation. Modulates the timing and magnitude of the autophagy response, such as the size of the sequestering vesicles, through interacting with and regulating ATG1 kinase activity. Plays particularly a role in pexophagy and nucleophagy. With ATG13, is required for ATG1 activation by autophosphorylation. Recruits ATG9 to the pre-autophagosomal structure. This Kluyveromyces marxianus (strain DMKU3-1042 / BCC 29191 / NBRC 104275) (Yeast) protein is Autophagy-related protein 17.